The sequence spans 240 residues: MRSGVIAQKLGMTRVFTDAGEHIPVTVLKLDGCQVVGHRTKEQNGYVAVQLGIGRAKVKNVSKAERGRFAVAKVEPKLKLAEFRVDDATLLPIGAEITADHFVVGQFVDVTGTSTGKGFAGAMKRWNFGGLRATHGVSISHRSHGSTGGRQDPGKTFKNKKMAGHLGTERVTTLNLRVVQTDVERGLILVEGAVPGTAGGWIYVRDAVKKHLPKEAPLPGKFRLANEGAEPAPATESAEG.

Disordered regions lie at residues 138-158 (SISH…KTFK) and 215-240 (EAPL…SAEG). N5-methylglutamine is present on Q151.

This sequence belongs to the universal ribosomal protein uL3 family. As to quaternary structure, part of the 50S ribosomal subunit. Forms a cluster with proteins L14 and L19. Methylated by PrmB.

One of the primary rRNA binding proteins, it binds directly near the 3'-end of the 23S rRNA, where it nucleates assembly of the 50S subunit. This Beijerinckia indica subsp. indica (strain ATCC 9039 / DSM 1715 / NCIMB 8712) protein is Large ribosomal subunit protein uL3.